Reading from the N-terminus, the 328-residue chain is Acetyl-coenzyme A carboxylase carboxyl transferase subunit alpha (328 aa).

The region spanning S42–F296 is the CoA carboxyltransferase C-terminal domain.

It belongs to the AccA family. Acetyl-CoA carboxylase is a heterohexamer composed of biotin carboxyl carrier protein (accB), biotin carboxylase (accC) and two subunits each of ACCase subunit alpha (accA) and ACCase subunit beta (accD).

It localises to the plastid. The protein resides in the chloroplast. It carries out the reaction N(6)-carboxybiotinyl-L-lysyl-[protein] + acetyl-CoA = N(6)-biotinyl-L-lysyl-[protein] + malonyl-CoA. The protein operates within lipid metabolism; malonyl-CoA biosynthesis; malonyl-CoA from acetyl-CoA: step 1/1. In terms of biological role, component of the acetyl coenzyme A carboxylase (ACC) complex. First, biotin carboxylase catalyzes the carboxylation of biotin on its carrier protein (BCCP) and then the CO(2) group is transferred by the carboxyltransferase to acetyl-CoA to form malonyl-CoA. This is Acetyl-coenzyme A carboxylase carboxyl transferase subunit alpha from Gracilaria tenuistipitata var. liui (Red alga).